A 232-amino-acid chain; its full sequence is Large ribosomal subunit protein uL1 (232 aa).

The protein belongs to the universal ribosomal protein uL1 family. In terms of assembly, part of the 50S ribosomal subunit.

Functionally, binds directly to 23S rRNA. The L1 stalk is quite mobile in the ribosome, and is involved in E site tRNA release. Protein L1 is also a translational repressor protein, it controls the translation of the L11 operon by binding to its mRNA. The sequence is that of Large ribosomal subunit protein uL1 from Aliarcobacter butzleri (strain RM4018) (Arcobacter butzleri).